Reading from the N-terminus, the 137-residue chain is Putative pre-16S rRNA nuclease (137 aa).

It belongs to the YqgF nuclease family.

The protein localises to the cytoplasm. Functionally, could be a nuclease involved in processing of the 5'-end of pre-16S rRNA. The polypeptide is Putative pre-16S rRNA nuclease (Desulforamulus reducens (strain ATCC BAA-1160 / DSM 100696 / MI-1) (Desulfotomaculum reducens)).